The sequence spans 196 residues: Adenylate kinase (196 aa).

9–17 serves as a coordination point for ATP; it reads GIPGVGKST.

This sequence belongs to the archaeal adenylate kinase family.

Its subcellular location is the cytoplasm. It catalyses the reaction AMP + ATP = 2 ADP. In Pyrococcus abyssi (strain GE5 / Orsay), this protein is Adenylate kinase (adkA).